The following is a 396-amino-acid chain: Elongation factor Tu (396 aa).

Residues 10 to 206 (KPHVNVGTIG…ALDTYIPTPE (197 aa)) enclose the tr-type G domain. Positions 19–26 (GHVDHGKT) are G1. Position 19–26 (19–26 (GHVDHGKT)) interacts with GTP. T26 serves as a coordination point for Mg(2+). The interval 60-64 (GITIN) is G2. The tract at residues 81-84 (DCPG) is G3. GTP is bound by residues 81–85 (DCPGH) and 136–139 (NKCD). A G4 region spans residues 136–139 (NKCD). The interval 174–176 (SAK) is G5.

Belongs to the TRAFAC class translation factor GTPase superfamily. Classic translation factor GTPase family. EF-Tu/EF-1A subfamily. Monomer.

The protein resides in the cytoplasm. It carries out the reaction GTP + H2O = GDP + phosphate + H(+). Its function is as follows. GTP hydrolase that promotes the GTP-dependent binding of aminoacyl-tRNA to the A-site of ribosomes during protein biosynthesis. The protein is Elongation factor Tu of Cupriavidus necator (strain ATCC 17699 / DSM 428 / KCTC 22496 / NCIMB 10442 / H16 / Stanier 337) (Ralstonia eutropha).